A 283-amino-acid polypeptide reads, in one-letter code: ATP phosphoribosyltransferase (283 aa).

The protein belongs to the ATP phosphoribosyltransferase family. Long subfamily. In terms of assembly, equilibrium between an active dimeric form, an inactive hexameric form and higher aggregates. Interconversion between the various forms is largely reversible and is influenced by the natural substrates and inhibitors of the enzyme. Requires Mg(2+) as cofactor.

Its subcellular location is the cytoplasm. The catalysed reaction is 1-(5-phospho-beta-D-ribosyl)-ATP + diphosphate = 5-phospho-alpha-D-ribose 1-diphosphate + ATP. It participates in amino-acid biosynthesis; L-histidine biosynthesis; L-histidine from 5-phospho-alpha-D-ribose 1-diphosphate: step 1/9. Its activity is regulated as follows. Feedback inhibited by histidine. Its function is as follows. Catalyzes the condensation of ATP and 5-phosphoribose 1-diphosphate to form N'-(5'-phosphoribosyl)-ATP (PR-ATP). Has a crucial role in the pathway because the rate of histidine biosynthesis seems to be controlled primarily by regulation of HisG enzymatic activity. This chain is ATP phosphoribosyltransferase, found in Mycobacterium sp. (strain JLS).